A 151-amino-acid chain; its full sequence is 3-hydroxyacyl-[acyl-carrier-protein] dehydratase FabZ (151 aa).

The active site involves H56.

It belongs to the thioester dehydratase family. FabZ subfamily.

The protein resides in the cytoplasm. The enzyme catalyses a (3R)-hydroxyacyl-[ACP] = a (2E)-enoyl-[ACP] + H2O. Functionally, involved in unsaturated fatty acids biosynthesis. Catalyzes the dehydration of short chain beta-hydroxyacyl-ACPs and long chain saturated and unsaturated beta-hydroxyacyl-ACPs. The protein is 3-hydroxyacyl-[acyl-carrier-protein] dehydratase FabZ of Nitrobacter winogradskyi (strain ATCC 25391 / DSM 10237 / CIP 104748 / NCIMB 11846 / Nb-255).